The chain runs to 367 residues: Phospho-N-acetylmuramoyl-pentapeptide-transferase (367 aa).

Helical transmembrane passes span 16 to 36, 62 to 82, 87 to 107, 125 to 145, 158 to 178, 190 to 210, 214 to 234, 240 to 260, 264 to 284, and 326 to 346; these read LLLA…WVHF, TMGG…FNLV, MLLP…DDWL, FWIM…PQPY, VGEV…IVFI, SLAG…TFLA, LTNL…FLWY, QVFM…VVAL, QWIL…STLI, and FVLI…IFGS.

This sequence belongs to the glycosyltransferase 4 family. MraY subfamily. It depends on Mg(2+) as a cofactor.

The protein localises to the cell membrane. The catalysed reaction is UDP-N-acetyl-alpha-D-muramoyl-L-alanyl-gamma-D-glutamyl-meso-2,6-diaminopimeloyl-D-alanyl-D-alanine + di-trans,octa-cis-undecaprenyl phosphate = di-trans,octa-cis-undecaprenyl diphospho-N-acetyl-alpha-D-muramoyl-L-alanyl-D-glutamyl-meso-2,6-diaminopimeloyl-D-alanyl-D-alanine + UMP. It functions in the pathway cell wall biogenesis; peptidoglycan biosynthesis. In terms of biological role, catalyzes the initial step of the lipid cycle reactions in the biosynthesis of the cell wall peptidoglycan: transfers peptidoglycan precursor phospho-MurNAc-pentapeptide from UDP-MurNAc-pentapeptide onto the lipid carrier undecaprenyl phosphate, yielding undecaprenyl-pyrophosphoryl-MurNAc-pentapeptide, known as lipid I. This chain is Phospho-N-acetylmuramoyl-pentapeptide-transferase, found in Chloroflexus aggregans (strain MD-66 / DSM 9485).